The following is a 104-amino-acid chain: Circadian clock oscillator protein KaiB (104 aa).

The protein belongs to the KaiB family. In terms of assembly, the KaiABC complex composition changes during the circadian cycle to control KaiC phosphorylation. Complexes KaiC(6), KaiA(2-4):KaiC(6), KaiB(6):KaiC(6) and KaiC(6):KaiB(6):KaiA(12) are among the most important forms, many form cooperatively. Undergoes a major conformational rearrangment; in the free state forms homotetramers as a dimer of dimers. When bound to the CI domain of KaiC switches to a monomeric thioredoxin-fold (KaiB(fs)). KaiB(fs) binds CikA, leading it to dephosphorylate phospho-RpaA.

Functionally, key component of the KaiABC oscillator complex, which constitutes the main circadian regulator in cyanobacteria. Complex composition changes during the circadian cycle to control KaiC phosphorylation. KaiA stimulates KaiC autophosphorylation, while KaiB sequesters KaiA, leading to KaiC autodephosphorylation. Phospho-Ser-431 KaiC accumulation triggers binding of KaiB to form the KaiB(6):KaiC(6) complex, leading to changes in output regulators CikA and SasA. KaiB switches to a thioredoxin-like fold (KaiB(fs)) when bound to KaiC. KaiB(6):KaiC(6) formation exposes a site for KaiA binding that sequesters KaiA from KaiC, making the KaiC(6):KaiB(6):KaiA(12) complex that results in KaiC autodephosphorylation. In terms of biological role, a metamorphic protein which reversibly switches between an inactive tetrameric fold and a rare, thioredoxin-like monomeric fold (KaiB(fs)). KaiB(fs) binds phospho-KaiC, KaiA and CikA. KaiA and CikA compete for binding to KaiB(fs), and KaiB(fs) and SasA compete for binding to KaiC, thus the clock oscillator and output signal pathway are tightly coupled. In Acaryochloris marina (strain MBIC 11017), this protein is Circadian clock oscillator protein KaiB.